We begin with the raw amino-acid sequence, 157 residues long: Arginine regulator (157 aa).

The protein belongs to the ArgR family.

The protein localises to the cytoplasm. Its pathway is amino-acid degradation; L-arginine degradation via ADI pathway. Regulates the transcription of the arc operon, involved in arginine catabolism. The protein is Arginine regulator (argR1) of Streptococcus pyogenes serotype M3 (strain ATCC BAA-595 / MGAS315).